The chain runs to 544 residues: Phosphoacetylglucosamine mutase (544 aa).

Residue Ser66 is the Phosphoserine intermediate of the active site. Mg(2+) is bound by residues Ser66, Asp290, Asp292, and Asp294. Substrate contacts are provided by residues 387-389 (EAN), 512-516 (RASGT), and Arg521.

Belongs to the phosphohexose mutase family. The cofactor is Mg(2+).

It catalyses the reaction N-acetyl-alpha-D-glucosamine 1-phosphate = N-acetyl-D-glucosamine 6-phosphate. It functions in the pathway nucleotide-sugar biosynthesis; UDP-N-acetyl-alpha-D-glucosamine biosynthesis; N-acetyl-alpha-D-glucosamine 1-phosphate from alpha-D-glucosamine 6-phosphate (route I): step 2/2. Functionally, catalyzes the conversion of GlcNAc-6-P into GlcNAc-1-P during the synthesis of uridine diphosphate/UDP-GlcNAc, which is a biosynthetic precursor of chitin and also supplies the amino sugars for N-linked oligosaccharides of glycoproteins. The sequence is that of Phosphoacetylglucosamine mutase from Candida albicans (Yeast).